Consider the following 436-residue polypeptide: Trigger factor (436 aa).

The PPIase FKBP-type domain maps to 161 to 248 (TDRVTIDLYG…LKKVEQYRLP (88 aa)).

The protein belongs to the FKBP-type PPIase family. Tig subfamily.

The protein localises to the cytoplasm. The catalysed reaction is [protein]-peptidylproline (omega=180) = [protein]-peptidylproline (omega=0). Involved in protein export. Acts as a chaperone by maintaining the newly synthesized protein in an open conformation. Functions as a peptidyl-prolyl cis-trans isomerase. This Baumannia cicadellinicola subsp. Homalodisca coagulata protein is Trigger factor.